The sequence spans 952 residues: Disintegrin and metalloproteinase domain-containing protein adm-2 (952 aa).

Topologically, residues 1 to 672 (MTDTLDLKLS…NEAYRFRGIT (672 aa)) are extracellular. Residues N125 and N301 are each glycosylated (N-linked (GlcNAc...) asparagine). Positions 177-373 (RFVELALVAD…GIDLCLFNEP (197 aa)) constitute a Peptidase M12B domain. 3 disulfide bridges follow: C287/C368, C330/C352, and C332/C337. H312 contacts Zn(2+). E313 is a catalytic residue. 2 residues coordinate Zn(2+): H316 and H322. Positions 379 to 466 (DAKCGNGIVE…DCPADFFVQN (88 aa)) constitute a Disintegrin domain. The N-linked (GlcNAc...) asparagine glycan is linked to N406. 4 disulfide bridges follow: C438–C458, C624–C634, C628–C640, and C642–C651. The EGF-like domain maps to 620-652 (VTAQCLDNCNFRGVCNNVGNCHCERGFGGIACE). The chain crosses the membrane as a helical span at residues 673 to 693 (LSSTFLVFFCLFGIFIGGLCV). The Cytoplasmic segment spans residues 694–952 (YYRVKRKRNL…AAIFDQKLKK (259 aa)). Disordered stretches follow at residues 778-809 (IPMV…ERAT) and 829-938 (SFNT…EKVD). 2 stretches are compositionally biased toward basic and acidic residues: residues 798–809 (AEKEEQNQERAT) and 849–873 (PSDD…DRLN). Over residues 905-914 (QAPPPPPPAH) the composition is skewed to pro residues. The span at 925-938 (KVSEDAAATEEKVD) shows a compositional bias: basic and acidic residues.

Zn(2+) serves as cofactor. Expressed in hyp7 large epidermal syncytium (punctate distribution), seam cell syncytia, anterior epidermis, neurons located in the head, tail and central body, proximal oogenic cells (levels increasing in maturing oocytes) and myoepithelial cells of the spermatheca (at protein level). Not detected in mature sperm cells.

The protein resides in the cell membrane. The protein localises to the endosome membrane. It localises to the lysosome membrane. Its function is as follows. Metalloprotease that cleaves and releases a number of molecules. Negative regulator of lrp-1 protein levels, potentially by influencing its endosomal trafficking. Involved in regulating the molting process. This chain is Disintegrin and metalloproteinase domain-containing protein adm-2, found in Caenorhabditis elegans.